The sequence spans 482 residues: Islet cell autoantigen 1-like protein (482 aa).

In terms of domain architecture, AH spans 44–247 (ASDAELDAKL…TARMMSQIHE (204 aa)). Disordered regions lie at residues 365–393 (TQECQTAFGSPSASLTSQEPSMGSEPLAH) and 427–449 (SHTDNQPVPSQSPKKLTRSPNNG). Composition is skewed to polar residues over residues 366–385 (QECQTAFGSPSASLTSQEPS) and 428–449 (HTDNQPVPSQSPKKLTRSPNNG).

In Homo sapiens (Human), this protein is Islet cell autoantigen 1-like protein (ICA1L).